Reading from the N-terminus, the 745-residue chain is Probable xyloglucan glycosyltransferase 3 (745 aa).

Helical transmembrane passes span 116–136 (GFLL…LKGW) and 196–216 (IDYI…LFMV). The active site involves D300. Positions 359 and 361 each coordinate substrate. D453 is a catalytic residue. The next 4 helical transmembrane spans lie at 531–551 (LILP…TMFV), 556–576 (LPIW…ILPA), 695–715 (IFKK…RSLL), and 720–740 (LHFY…LDLI).

This sequence belongs to the glycosyltransferase 2 family. Plant cellulose synthase-like C subfamily.

The protein localises to the golgi apparatus membrane. Its function is as follows. Probable beta-1,4-glucan synthase rather involved in the synthesis of the xyloglucan backbone than cellulose. Seems to work simultaneously with xyloglucan 6-xylosyltransferase. Xyloglucan is a noncellulosic polysaccharides of plant cell wall and consists of a glucan backbone substituted by xylose, galactose and fucose. The chain is Probable xyloglucan glycosyltransferase 3 (CSLC3) from Oryza sativa subsp. japonica (Rice).